We begin with the raw amino-acid sequence, 201 residues long: Proteasome subunit beta type-2 (201 aa).

N-acetylmethionine is present on Met1.

It belongs to the peptidase T1B family. As to quaternary structure, the 26S proteasome consists of a 20S proteasome core and two 19S regulatory subunits. The 20S proteasome core is a barrel-shaped complex made of 28 subunits that are arranged in four stacked rings. The two outer rings are each formed by seven alpha subunits, and the two inner rings are formed by seven beta subunits. The proteolytic activity is exerted by three beta-subunits PSMB5, PSMB6 and PSMB7. In terms of assembly, (Microbial infection) Interacts with HIV-1 protein Tat.

The protein resides in the cytoplasm. Its subcellular location is the nucleus. In terms of biological role, non-catalytic component of the 20S core proteasome complex involved in the proteolytic degradation of most intracellular proteins. This complex plays numerous essential roles within the cell by associating with different regulatory particles. Associated with two 19S regulatory particles, forms the 26S proteasome and thus participates in the ATP-dependent degradation of ubiquitinated proteins. The 26S proteasome plays a key role in the maintenance of protein homeostasis by removing misfolded or damaged proteins that could impair cellular functions, and by removing proteins whose functions are no longer required. Associated with the PA200 or PA28, the 20S proteasome mediates ubiquitin-independent protein degradation. This type of proteolysis is required in several pathways including spermatogenesis (20S-PA200 complex) or generation of a subset of MHC class I-presented antigenic peptides (20S-PA28 complex). In Homo sapiens (Human), this protein is Proteasome subunit beta type-2.